A 354-amino-acid chain; its full sequence is Acyl-CoA-binding domain-containing protein 2 (354 aa).

Residues 11–31 (VILGLIFSYLLAKLISIVVTF) form a helical; Signal-anchor membrane-spanning segment. The segment at 75–96 (AEQGSSRSDSVAGDDSEEDDDW) is disordered. The span at 86-96 (AGDDSEEDDDW) shows a compositional bias: acidic residues. Residues 104–194 (LDEAFSAATL…VTQLYPTWLD (91 aa)) enclose the ACB domain. An acyl-CoA contacts are provided by residues 136 to 140 (YGLYK), Lys162, and Tyr181. 2 ANK repeats span residues 265 to 294 (EGRT…DVNA) and 298 to 327 (EGQT…NTAA).

This sequence belongs to the ACBP family. As to quaternary structure, interacts (via ankyrin repeats) with HIPP26 and the ethylene-responsive element-binding proteins RAP2-3/EBP and RAP2-12. Interacts with CSE. As to expression, mostly expressed in roots and flowers, and, to a lower extent, in stems, pods and leaves (at protein level).

The protein localises to the cell membrane. The protein resides in the endoplasmic reticulum membrane. It is found in the peroxisome membrane. Binds medium- and long-chain acyl-CoA esters with very high affinity. Can interact in vitro with palmitoyl-CoA, but not with oleoyl-CoA. Binds to lead ions (Pb). May function as an intracellular carrier of acyl-CoA esters. Required for proper phospholipid and, to a lower extent, galactolipid composition. In Arabidopsis thaliana (Mouse-ear cress), this protein is Acyl-CoA-binding domain-containing protein 2 (ACBP2).